The chain runs to 122 residues: Large ribosomal subunit protein bL12 (122 aa).

Belongs to the bacterial ribosomal protein bL12 family. As to quaternary structure, homodimer. Part of the ribosomal stalk of the 50S ribosomal subunit. Forms a multimeric L10(L12)X complex, where L10 forms an elongated spine to which 2 to 4 L12 dimers bind in a sequential fashion. Binds GTP-bound translation factors.

Forms part of the ribosomal stalk which helps the ribosome interact with GTP-bound translation factors. Is thus essential for accurate translation. This Mycoplasma mycoides subsp. mycoides SC (strain CCUG 32753 / NCTC 10114 / PG1) protein is Large ribosomal subunit protein bL12.